An 809-amino-acid polypeptide reads, in one-letter code: Lon protease (809 aa).

Positions 42-242 (LVIYPLGGRP…KVLTLLKKEL (201 aa)) constitute a Lon N-terminal domain. Residue 395 to 402 (GPPGVGKT) participates in ATP binding. Residues 629–809 (LTGVGIVTGL…YAEVAKLVFG (181 aa)) enclose the Lon proteolytic domain. Active-site residues include Ser716 and Lys759.

The protein belongs to the peptidase S16 family. In terms of assembly, homohexamer. Organized in a ring with a central cavity.

It localises to the cytoplasm. It carries out the reaction Hydrolysis of proteins in presence of ATP.. In terms of biological role, ATP-dependent serine protease that mediates the selective degradation of mutant and abnormal proteins as well as certain short-lived regulatory proteins. Required for cellular homeostasis and for survival from DNA damage and developmental changes induced by stress. Degrades polypeptides processively to yield small peptide fragments that are 5 to 10 amino acids long. Binds to DNA in a double-stranded, site-specific manner. In Magnetococcus marinus (strain ATCC BAA-1437 / JCM 17883 / MC-1), this protein is Lon protease.